The chain runs to 159 residues: uncharacterized protein (159 aa).

The N-acetyltransferase domain occupies 1–139; sequence MNIIPTCQVP…TARKMKPEIP (139 aa).

This is an uncharacterized protein from Bacillus subtilis (strain 168).